The following is a 215-amino-acid chain: 3-isopropylmalate dehydratase small subunit (215 aa).

The protein belongs to the LeuD family. LeuD type 1 subfamily. In terms of assembly, heterodimer of LeuC and LeuD.

The enzyme catalyses (2R,3S)-3-isopropylmalate = (2S)-2-isopropylmalate. Its pathway is amino-acid biosynthesis; L-leucine biosynthesis; L-leucine from 3-methyl-2-oxobutanoate: step 2/4. Its function is as follows. Catalyzes the isomerization between 2-isopropylmalate and 3-isopropylmalate, via the formation of 2-isopropylmaleate. The sequence is that of 3-isopropylmalate dehydratase small subunit from Xanthomonas oryzae pv. oryzae (strain MAFF 311018).